Here is a 377-residue protein sequence, read N- to C-terminus: Membrane progestin receptor epsilon (377 aa).

The segment at 1-40 (MPRRLQPRGAGTKGPPAPAPAASGAARNSHSAASRDPPAS) is disordered. At 1 to 86 (MPRRLQPRGA…VLKPTNETLN (86 aa)) the chain is on the cytoplasmic side. Low complexity predominate over residues 9 to 26 (GAGTKGPPAPAPAASGAA). A helical transmembrane segment spans residues 87–107 (FWTHFIPLLLFLSKFCRLFFL). Topologically, residues 108–116 (SGGDVPFHH) are extracellular. The helical transmembrane segment at 117-137 (PWLLPLWCYASGVLLTFAMSC) threads the bilayer. Residues 138-162 (TAHVFSCLSLRLRAAFFYLDYASIS) are Cytoplasmic-facing. A helical transmembrane segment spans residues 163-183 (YYGFGSTVAYYYYLLPGLSLL). Topologically, residues 184-205 (DARVMTPYLQQRLGWHVDCTRL) are extracellular. A helical membrane pass occupies residues 206 to 226 (IAAYRALVLPVAFVLAVACTV). Residues 227–243 (ACCKSRTDWCTYPFALR) lie on the Cytoplasmic side of the membrane. Residues 244–264 (TFVFVMPLSMACPIMLESWLF) form a helical membrane-spanning segment. Topologically, residues 265-301 (DLRGENPTLFVHFYRRYFWLVVAAFFNVSKIPERIQP) are extracellular. A helical membrane pass occupies residues 302-322 (GLFDIIGHSHQLFHIFTFLSI). Over 323–343 (YDQVYYVEEGLRQFLQAPPAA) the chain is Cytoplasmic. The helical transmembrane segment at 344 to 364 (PTFSGTVGYMLLLVVCLGLVI) threads the bilayer. Residues 365-377 (RKFLNSSEFCSKK) are Extracellular-facing.

Belongs to the ADIPOR family. In terms of assembly, homodimer. As to expression, expression levels vary widely in a range of tissues. Expressed in the brain, at high level in the pituitary gland and also in hypothalamus, limbic system, caudate nucleus accumens, pons and olfactory bulb.

It localises to the cell membrane. Its function is as follows. Plasma membrane progesterone (P4) receptor coupled to G proteins. Seems to act through a G(s) mediated pathway. May be involved in regulating rapid P4 signaling in the nervous system. Also binds dehydroepiandrosterone (DHEA), pregnanolone, pregnenolone and allopregnanolone. The polypeptide is Membrane progestin receptor epsilon (Homo sapiens (Human)).